The chain runs to 237 residues: Phosphoribosylaminoimidazole-succinocarboxamide synthase (237 aa).

This sequence belongs to the SAICAR synthetase family.

The catalysed reaction is 5-amino-1-(5-phospho-D-ribosyl)imidazole-4-carboxylate + L-aspartate + ATP = (2S)-2-[5-amino-1-(5-phospho-beta-D-ribosyl)imidazole-4-carboxamido]succinate + ADP + phosphate + 2 H(+). It functions in the pathway purine metabolism; IMP biosynthesis via de novo pathway; 5-amino-1-(5-phospho-D-ribosyl)imidazole-4-carboxamide from 5-amino-1-(5-phospho-D-ribosyl)imidazole-4-carboxylate: step 1/2. The sequence is that of Phosphoribosylaminoimidazole-succinocarboxamide synthase from Deinococcus radiodurans (strain ATCC 13939 / DSM 20539 / JCM 16871 / CCUG 27074 / LMG 4051 / NBRC 15346 / NCIMB 9279 / VKM B-1422 / R1).